The following is a 350-amino-acid chain: MNSLYSVVNTLRDRYAPVSHTSTFRQTGEITPEEFVAAGDYLVFKFPTWSWGDADSESRRASHLPPGKQFLVTRNVPCNRRLNENFAGDAGLEEAVVDDGDEFKGSKGDDDGWLRTGGLSSSQPLKAREVRTVDDAGNAGERAQPDDDDDIPDMEDEEDDEAIIRDTDASGQTSSRRTYTLYIMYSPYYRTPRLYLSGYGANGQPLPPHNMMEDIMGDYKDKTVTLEDFPFFANNIKMASVHPCKHAPVMKTLLDRADAALKLRREKLKTGDASGQQAGLEGLADEFNKLGVSGKGDASKIDKNDEWEDIQHDDVADQEVAIRVDQYLVVFLKFIASVTPGIEHDFTMGV.

Residues 85–166 (NFAGDAGLEE…EEDDEAIIRD (82 aa)) form a flexible region region. The tract at residues 97-171 (VDDGDEFKGS…AIIRDTDASG (75 aa)) is disordered. The span at 102 to 113 (EFKGSKGDDDGW) shows a compositional bias: basic and acidic residues. The span at 146–161 (DDDDDIPDMEDEEDDE) shows a compositional bias: acidic residues. Cys244 (glycyl thioester intermediate) is an active-site residue. The handle region stretch occupies residues 248-326 (PVMKTLLDRA…DQEVAIRVDQ (79 aa)). N6-acetyllysine occurs at positions 262 and 267.

It belongs to the ATG3 family. As to quaternary structure, monomer. Interacts with ATG8 through an intermediate thioester bond through the C-terminal Gly of ATG8. Also interacts with the 40 amino acid C-terminal region of the E1-like ATG7 enzyme. Also interacts with the ATG12-ATG5 conjugate. Interacts with HAT1. Acetylated by HAT1 at Lys-262 and Lys-267, which affects the interaction with ATG8 and prevents autophagy during both appressorium development and nutrient starvation.

Its subcellular location is the preautophagosomal structure. The protein localises to the cytoplasm. E2 conjugating enzyme required for the cytoplasm to vacuole transport (Cvt) and autophagy. Required for selective autophagic degradation of the nucleus (nucleophagy) as well as for mitophagy which contributes to regulate mitochondrial quantity and quality by eliminating the mitochondria to a basal level to fulfill cellular energy requirements and preventing excess ROS production. Responsible for the E2-like covalent binding of phosphatidylethanolamine to the C-terminal Gly of ATG8. The ATG12-ATG5 conjugate plays a role of an E3 and promotes the transfer of ATG8 from ATG3 to phosphatidylethanolamine (PE). This step is required for the membrane association of ATG8. The formation of the ATG8-phosphatidylethanolamine conjugate is essential for autophagy and for the cytoplasm to vacuole transport (Cvt). The ATG8-PE conjugate mediates tethering between adjacent membranes and stimulates membrane hemifusion, leading to expansion of the autophagosomal membrane during autophagy. Plays a role in appressorium formation and pathogenicity. The protein is Autophagy-related protein 3 of Pyricularia oryzae (strain 70-15 / ATCC MYA-4617 / FGSC 8958) (Rice blast fungus).